The sequence spans 360 residues: Hyaluronan and proteoglycan link protein 3 (360 aa).

Positions 1–17 (MGLLLLVPLLLLPGSYG) are cleaved as a signal peptide. Residues 48–164 (KLVVETPEET…ESGLVELELR (117 aa)) form the Ig-like V-type domain. 5 cysteine pairs are disulfide-bonded: C70–C146, C188–C259, C212–C233, C286–C356, and C311–C332. Link domains lie at 166–261 (VVFP…FCFA) and 266–358 (GRVY…YCYR).

This sequence belongs to the HAPLN family. In terms of tissue distribution, widely expressed with highest levels in spleen and placenta.

The protein resides in the secreted. It is found in the extracellular space. Its subcellular location is the extracellular matrix. In terms of biological role, may function in hyaluronic acid binding. The protein is Hyaluronan and proteoglycan link protein 3 (HAPLN3) of Homo sapiens (Human).